The sequence spans 215 residues: Urease accessory protein UreG 2 (215 aa).

GTP is bound at residue 11-18; the sequence is GPVGSGKT.

This sequence belongs to the SIMIBI class G3E GTPase family. UreG subfamily. In terms of assembly, homodimer. UreD, UreF and UreG form a complex that acts as a GTP-hydrolysis-dependent molecular chaperone, activating the urease apoprotein by helping to assemble the nickel containing metallocenter of UreC. The UreE protein probably delivers the nickel.

It is found in the cytoplasm. Its function is as follows. Facilitates the functional incorporation of the urease nickel metallocenter. This process requires GTP hydrolysis, probably effectuated by UreG. The protein is Urease accessory protein UreG 2 of Methylorubrum extorquens (strain PA1) (Methylobacterium extorquens).